The following is a 225-amino-acid chain: Membrane protein (225 aa).

Topologically, residues 1–20 (MDNTTNCTLGTEQAVQLFKE) are virion surface. Residues 21-41 (YNLFVTAFLLFLTILLQYGYA) traverse the membrane as a helical segment. Residues 42-51 (TRNKVIYILK) are Intravirion-facing. Residues 52-72 (MIVLWCFWPLNIAVGAISCIY) traverse the membrane as a helical segment. The Virion surface portion of the chain corresponds to 73–77 (PPNTG). Residues 78–98 (GLVAAIILTVFACLSFIGYWI) traverse the membrane as a helical segment. The Intravirion segment spans residues 99-225 (QSFRLFKRCR…VATGGSSLYT (127 aa)).

Belongs to the gammacoronaviruses M protein family. In terms of assembly, homomultimer. Interacts with envelope E protein in the budding compartment of the host cell, which is located between endoplasmic reticulum and the Golgi complex. Forms a complex with HE and S proteins. Interacts with nucleocapsid N protein. This interaction probably participates in RNA packaging into the virus.

It is found in the virion membrane. Its subcellular location is the host Golgi apparatus membrane. Functionally, component of the viral envelope that plays a central role in virus morphogenesis and assembly via its interactions with other viral proteins. This is Membrane protein from Avian infectious bronchitis virus (strain 6/82) (IBV).